The chain runs to 98 residues: HssA/B-like protein 39 (98 aa).

Positions Met-1–Ile-21 are disordered.

This sequence belongs to the hssA/B family.

This Dictyostelium discoideum (Social amoeba) protein is HssA/B-like protein 39 (hssl39).